A 439-amino-acid chain; its full sequence is Xylose isomerase (439 aa).

Active-site residues include histidine 100 and aspartate 103. 7 residues coordinate Mg(2+): glutamate 231, glutamate 267, histidine 270, aspartate 295, aspartate 306, aspartate 308, and aspartate 338.

Belongs to the xylose isomerase family. As to quaternary structure, homotetramer. Mg(2+) is required as a cofactor.

The protein resides in the cytoplasm. It catalyses the reaction alpha-D-xylose = alpha-D-xylulofuranose. This Rhodopirellula baltica (strain DSM 10527 / NCIMB 13988 / SH1) protein is Xylose isomerase.